Consider the following 199-residue polypeptide: NADH-quinone oxidoreductase subunit C (199 aa).

The protein belongs to the complex I 30 kDa subunit family. As to quaternary structure, NDH-1 is composed of 14 different subunits. Subunits NuoB, C, D, E, F, and G constitute the peripheral sector of the complex.

It localises to the cell membrane. The catalysed reaction is a quinone + NADH + 5 H(+)(in) = a quinol + NAD(+) + 4 H(+)(out). NDH-1 shuttles electrons from NADH, via FMN and iron-sulfur (Fe-S) centers, to quinones in the respiratory chain. The immediate electron acceptor for the enzyme in this species is believed to be ubiquinone. Couples the redox reaction to proton translocation (for every two electrons transferred, four hydrogen ions are translocated across the cytoplasmic membrane), and thus conserves the redox energy in a proton gradient. This chain is NADH-quinone oxidoreductase subunit C, found in Polynucleobacter asymbioticus (strain DSM 18221 / CIP 109841 / QLW-P1DMWA-1) (Polynucleobacter necessarius subsp. asymbioticus).